We begin with the raw amino-acid sequence, 183 residues long: Auxin-responsive protein IAA20 (183 aa).

Disordered stretches follow at residues 1–23 (MELE…TATA) and 42–77 (GFEE…NKRR). Residues 3 to 7 (LELGL) carry the EAR-like (transcriptional repression) motif. The PB1 domain occupies 98-183 (GGYVKVKMEG…KSVKRLKILV (86 aa)).

The protein belongs to the Aux/IAA family. In terms of assembly, homodimers and heterodimers. In terms of tissue distribution, expressed at very low levels in etiolated seedlings and flowers.

It localises to the nucleus. Aux/IAA proteins are short-lived transcriptional factors that function as repressors of early auxin response genes at low auxin concentrations. The chain is Auxin-responsive protein IAA20 (IAA20) from Oryza sativa subsp. japonica (Rice).